The chain runs to 591 residues: Probable sulfoacetaldehyde acetyltransferase (591 aa).

The segment at 359–383 is disordered; the sequence is MDHEDDDPGTEWNVGARQREPDRMS.

The protein belongs to the TPP enzyme family. Mg(2+) is required as a cofactor. Thiamine diphosphate serves as cofactor.

The protein localises to the cytoplasm. The enzyme catalyses acetyl phosphate + sulfite + H(+) = sulfoacetaldehyde + phosphate. Its pathway is organosulfur degradation; taurine degradation via aerobic pathway; acetyl phosphate and sulfite from taurine: step 2/2. In Rhizobium meliloti (strain 1021) (Ensifer meliloti), this protein is Probable sulfoacetaldehyde acetyltransferase (xsc).